A 627-amino-acid chain; its full sequence is Dual specificity testis-specific protein kinase 1 (627 aa).

The interval 1 to 36 is disordered; that stretch reads MAGERPPLRGPGPGEAPGEGPGGAGGGPGRGRPSSY. Gly residues predominate over residues 11 to 30; that stretch reads PGPGEAPGEGPGGAGGGPGR. One can recognise a Protein kinase domain in the interval 52–309; sequence FDCAEKIGAG…TEITQHLEQI (258 aa). ATP contacts are provided by residues 58–66 and Lys-81; that span reads IGAGFFSEV. Asp-170 acts as the Proton acceptor in catalysis. Position 215 is a phosphoserine; by autocatalysis (Ser-215). The span at 316 to 330 shows a compositional bias: low complexity; the sequence is ATPLAKPPLTKAPLT. Disordered stretches follow at residues 316-373, 436-485, 500-519, and 532-565; these read ATPL…SWGD, RCRS…GLAP, CSSASQPWSPRSGPPLNNNP, and REPWNRAQHSLPRAAALERTEPSPPPSAPREPEE. Arg-338 carries the post-translational modification Omega-N-methylarginine. Residues 348–357 show a composition bias toward basic and acidic residues; sequence PDPRLSRSRS. Residues 421–525 are required for interaction with YWHAB; the sequence is VTTPDILVQP…NNNPPAVVVN (105 aa). The segment at 528-625 is required for interaction with PARVA; it reads QGWAREPWNR…PTPSLQLPGA (98 aa). Positions 528 to 627 are required for interaction with SPRED1 and SPRY2. Required for TESK1-mediated dephosphorylation of SPRY2 and SPRY2 inhibition of ERK phosphorylation; the sequence is QGWAREPWNR…PSLQLPGARS (100 aa).

This sequence belongs to the protein kinase superfamily. TKL Ser/Thr protein kinase family. As to quaternary structure, interacts (via both C- and N-termini) with SPRY4 (via C-terminus); the interaction inhibits TESK1 kinase activity. Interacts with TAOK1; the interaction inhibits TAOK1 kinase activity. Interacts (via C-terminus) with SPRED1 (via C-terminus); the interaction inhibits TESK1 kinase activity. Interacts (via C-terminus) with PARVA/PARVIN (via C-terminus); the interaction inhibits TESK1 kinase activity. Interacts with YWHAB/14-3-3 beta; the interaction is dependent on the phosphorylation of TESK1 Ser-439 and inhibits TESK1 kinase activity. Interacts with SPRY1, SPRY3 and SPRED2. Interacts (via C-terminus) with SPRY2 (via C-terminus); the interaction disrupts SPRY2 interaction with PPP2CA/PP2A-C, possibly by vesicular sequestration of SPRY2. Therefore dephosphorylation of SPRY2 by the serine/threonine-protein phosphatase 2A (PP2A) holoenzyme is lost, inhibiting its interaction with GRB2. Mg(2+) serves as cofactor. Requires Mn(2+) as cofactor. Autophosphorylated on serine and tyrosine residues. Expressed in testes and brain (at protein level).

The protein resides in the cytoplasm. Its subcellular location is the perinuclear region. The protein localises to the cytoskeleton. It localises to the microtubule organizing center. It is found in the centrosome. The protein resides in the cell projection. Its subcellular location is the lamellipodium. It catalyses the reaction L-seryl-[protein] + ATP = O-phospho-L-seryl-[protein] + ADP + H(+). The catalysed reaction is L-threonyl-[protein] + ATP = O-phospho-L-threonyl-[protein] + ADP + H(+). It carries out the reaction L-tyrosyl-[protein] + ATP = O-phospho-L-tyrosyl-[protein] + ADP + H(+). Activated by autophosphorylation on Ser-215. Kinase activity is inhibited by SPRED1. In terms of biological role, dual specificity protein kinase activity catalyzing autophosphorylation and phosphorylation of exogenous substrates on both serine/threonine and tyrosine residues. Regulates the cellular cytoskeleton by enhancing actin stress fiber formation via phosphorylation of cofilin and by preventing microtubule breakdown via inhibition of TAOK1/MARKK kinase activity. Inhibits podocyte motility via regulation of actin cytoskeletal dynamics and phosphorylation of CFL1. Positively regulates integrin-mediated cell spreading, via phosphorylation of cofilin. Suppresses ciliogenesis via multiple pathways; phosphorylation of CFL1, suppression of ciliary vesicle directional trafficking to the ciliary base, and by facilitating YAP1 nuclear localization where it acts as a transcriptional corepressor of the TEAD4 target genes AURKA and PLK1. Probably plays a central role at and after the meiotic phase of spermatogenesis. The polypeptide is Dual specificity testis-specific protein kinase 1 (Tesk1) (Mus musculus (Mouse)).